A 1281-amino-acid chain; its full sequence is Zinc finger transcription factor Trps1 (1281 aa).

Disordered regions lie at residues 1–101 (MVRK…VSFP) and 116–204 (PAAG…KGDL). Composition is skewed to polar residues over residues 21-31 (LEPTATESKVS) and 40-49 (DQMSENTDQS). K29 participates in a covalent cross-link: Glycyl lysine isopeptide (Lys-Gly) (interchain with G-Cter in SUMO2). Phosphoserine occurs at positions 90 and 127. Over residues 148–162 (LETKEEHKMSPKATE) the composition is skewed to basic and acidic residues. Positions 166 to 189 (PVQSGQANCQGLSPVSVASKNPQV) are enriched in polar residues. A phosphoserine mark is found at S178 and S216. The C2H2-type 1; atypical zinc-finger motif lies at 222–247 (FKCNICGYGYYGNDPTDLIKHFRKYH). K263 participates in a covalent cross-link: Glycyl lysine isopeptide (Lys-Gly) (interchain with G-Cter in SUMO2). A C2H2-type 2; atypical zinc finger spans residues 333–358 (FRCKFCNFTYMGNSSTELEQHFLQTH). Residues 365 to 393 (SLPSSEGVKPSEKNSNKSIPALRASDSGD) form a disordered region. Glycyl lysine isopeptide (Lys-Gly) (interchain with G-Cter in SUMO2) cross-links involve residues K418, K457, K474, and K488. The interval 484 to 515 (NDLAKSVEGEPLTKPEKGLSGAKKKDFPSKGA) is disordered. A compositionally biased stretch (basic and acidic residues) spans 488-515 (KSVEGEPLTKPEKGLSGAKKKDFPSKGA). The C2H2-type 3; atypical zinc finger occupies 614 to 637 (HQCHQCSFSTPDVDVLLFHYETVH). Residues 635 to 819 (TVHESQASDV…SLGLLTPVSS (185 aa)) form a mediates interaction with GLI3 region. K645 participates in a covalent cross-link: Glycyl lysine isopeptide (Lys-Gly) (interchain with G-Cter in SUMO2). 2 C2H2-type zinc fingers span residues 666-689 (HSCT…RRAH) and 692-715 (YKCR…NTVH). Residues K737 and K755 each participate in a glycyl lysine isopeptide (Lys-Gly) (interchain with G-Cter in SUMO2) cross-link. A Glycyl lysine isopeptide (Lys-Gly) (interchain with G-Cter in SUMO1); alternate cross-link involves residue K766. Residue K766 forms a Glycyl lysine isopeptide (Lys-Gly) (interchain with G-Cter in SUMO2); alternate linkage. Glycyl lysine isopeptide (Lys-Gly) (interchain with G-Cter in SUMO2) cross-links involve residues K825 and K850. The segment at 856–885 (APAGSEKSASLTQQYPASGESKTKDESQSL) is disordered. The span at 862–871 (KSASLTQQYP) shows a compositional bias: polar residues. Residues K877 and K879 each participate in a glycyl lysine isopeptide (Lys-Gly) (interchain with G-Cter in SUMO2) cross-link. The GATA-type zinc-finger motif lies at 896–920 (CANCLTTKTSLWRKNANGGYVCNAC). Residues K925, K937, and K965 each participate in a glycyl lysine isopeptide (Lys-Gly) (interchain with G-Cter in SUMO2) cross-link. Residues 961 to 977 (EQLNKQQRGSGEEQVNG) are compositionally biased toward polar residues. Residues 961–1000 (EQLNKQQRGSGEEQVNGSPLERRSEDHLSESHPREIPLPS) form a disordered region. Position 978 is a phosphoserine (S978). A compositionally biased stretch (basic and acidic residues) spans 980–995 (LERRSEDHLSESHPRE). A mediates interaction with RNF4 region spans residues 985–1184 (EDHLSESHPR…PTANGASKEK (200 aa)). Residues K1003, K1012, K1030, and K1040 each participate in a glycyl lysine isopeptide (Lys-Gly) (interchain with G-Cter in SUMO2) cross-link. Residues 1040–1049 (KSPQESTGDP) show a composition bias toward polar residues. Residues 1040–1078 (KSPQESTGDPGNSSSVSDGKGSSERGSPIEKYMRPAKHP) form a disordered region. A Phosphoserine modification is found at S1041. Over residues 1050-1059 (GNSSSVSDGK) the composition is skewed to low complexity. The span at 1060–1072 (GSSERGSPIEKYM) shows a compositional bias: basic and acidic residues. S1066 carries the phosphoserine modification. Residue K1070 forms a Glycyl lysine isopeptide (Lys-Gly) (interchain with G-Cter in SUMO2) linkage. A Phosphoserine modification is found at S1085. Residues 1163-1281 (PLDLAIKHSR…QAEKNGKPKE (119 aa)) are transcriptional repressor domain. A disordered region spans residues 1169 to 1195 (KHSRPGPTANGASKEKTKAPPTVKNED). Residues K1192 and K1201 each participate in a glycyl lysine isopeptide (Lys-Gly) (interchain with G-Cter in SUMO2); alternate cross-link. Glycyl lysine isopeptide (Lys-Gly) (interchain with G-Cter in SUMO); alternate cross-links involve residues K1192 and K1201. K1201 participates in a covalent cross-link: Glycyl lysine isopeptide (Lys-Gly) (interchain with G-Cter in SUMO1); alternate. C2H2-type zinc fingers lie at residues 1215-1237 (TKCV…MSCH) and 1243-1267 (FQCS…RGLH).

As to quaternary structure, interacts with RNF4; regulates TRPS1 repressor activity. Interacts specifically with the activator form of GLI3 (GLI3A) but not with the repressor form (GLI3R). Sumoylated. Sumoylation in the repressor domain inhibits the transcription repression activity. Sumoylation on Lys-1201 is the major site. Appears to be sumoylated on multiple sites. In terms of tissue distribution, in the embryo, expression is detected in both visceral and skeletal tissues. Found in the maxilla, mandible, snout, prospective phalanges and in the femoral head within the developing hip. Also expressed in the hair follicles.

Its subcellular location is the nucleus. In terms of biological role, transcriptional repressor. Binds specifically to GATA sequences and represses expression of GATA-regulated genes at selected sites and stages in vertebrate development. Regulates chondrocyte proliferation and differentiation. Executes multiple functions in proliferating chondrocytes, expanding the region of distal chondrocytes, activating proliferation in columnar cells and supporting the differentiation of columnar into hypertrophic chondrocytes. The polypeptide is Zinc finger transcription factor Trps1 (Trps1) (Mus musculus (Mouse)).